Consider the following 103-residue polypeptide: Large ribosomal subunit protein eL21 (103 aa).

This sequence belongs to the eukaryotic ribosomal protein eL21 family.

In Sulfolobus acidocaldarius (strain ATCC 33909 / DSM 639 / JCM 8929 / NBRC 15157 / NCIMB 11770), this protein is Large ribosomal subunit protein eL21.